A 444-amino-acid polypeptide reads, in one-letter code: UDP-N-acetylmuramoylalanine--D-glutamate ligase (444 aa).

Residue 113-119 coordinates ATP; it reads GSNGKST.

It belongs to the MurCDEF family.

Its subcellular location is the cytoplasm. It carries out the reaction UDP-N-acetyl-alpha-D-muramoyl-L-alanine + D-glutamate + ATP = UDP-N-acetyl-alpha-D-muramoyl-L-alanyl-D-glutamate + ADP + phosphate + H(+). It functions in the pathway cell wall biogenesis; peptidoglycan biosynthesis. In terms of biological role, cell wall formation. Catalyzes the addition of glutamate to the nucleotide precursor UDP-N-acetylmuramoyl-L-alanine (UMA). The sequence is that of UDP-N-acetylmuramoylalanine--D-glutamate ligase from Blochmanniella floridana.